Consider the following 129-residue polypeptide: Small ribosomal subunit protein uS12 (129 aa).

2 disordered regions span residues 1–25 (MPTY…PALE) and 110–129 (RKQG…VTKK). Positions 10-20 (FGRKSKTRKTK) are enriched in basic residues.

This sequence belongs to the universal ribosomal protein uS12 family. As to quaternary structure, part of the 30S ribosomal subunit. Contacts proteins S8 and S17. May interact with IF1 in the 30S initiation complex.

With S4 and S5 plays an important role in translational accuracy. Functionally, interacts with and stabilizes bases of the 16S rRNA that are involved in tRNA selection in the A site and with the mRNA backbone. Located at the interface of the 30S and 50S subunits, it traverses the body of the 30S subunit contacting proteins on the other side and probably holding the rRNA structure together. The combined cluster of proteins S8, S12 and S17 appears to hold together the shoulder and platform of the 30S subunit. This is Small ribosomal subunit protein uS12 from Rickettsia conorii (strain ATCC VR-613 / Malish 7).